The sequence spans 382 residues: Pyrimidine monooxygenase RutA (382 aa).

FMN contacts are provided by residues 68–69, Asn134, Glu143, 159–160, and Ser209; these read IK and RY.

The protein belongs to the NtaA/SnaA/DszA monooxygenase family. RutA subfamily.

The catalysed reaction is uracil + FMNH2 + NADH + O2 = (Z)-3-ureidoacrylate + FMN + NAD(+) + H2O + H(+). The enzyme catalyses thymine + FMNH2 + NADH + O2 = (Z)-2-methylureidoacrylate + FMN + NAD(+) + H2O + H(+). Catalyzes the pyrimidine ring opening between N-3 and C-4 by an unusual flavin hydroperoxide-catalyzed mechanism, adding oxygen atoms in the process to yield ureidoacrylate peracid, that immediately reacts with FMN forming ureidoacrylate and FMN-N(5)-oxide. The FMN-N(5)-oxide reacts spontaneously with NADH to produce FMN. Requires the flavin reductase RutF to regenerate FMN in vivo. The sequence is that of Pyrimidine monooxygenase RutA from Escherichia coli (strain B / BL21-DE3).